We begin with the raw amino-acid sequence, 377 residues long: Protein RecA (377 aa).

Position 66-73 (66-73) interacts with ATP; the sequence is GPESSGKT. Positions 329 to 377 are disordered; the sequence is VGVRPEEPTAEPGADAAVTSAAAATDDTAKTVSAPAAKTTKSKAAAAKS. A compositionally biased stretch (low complexity) spans 342–377; it reads ADAAVTSAAAATDDTAKTVSAPAAKTTKSKAAAAKS.

It belongs to the RecA family.

The protein resides in the cytoplasm. Its function is as follows. Can catalyze the hydrolysis of ATP in the presence of single-stranded DNA, the ATP-dependent uptake of single-stranded DNA by duplex DNA, and the ATP-dependent hybridization of homologous single-stranded DNAs. It interacts with LexA causing its activation and leading to its autocatalytic cleavage. In Streptomyces avermitilis (strain ATCC 31267 / DSM 46492 / JCM 5070 / NBRC 14893 / NCIMB 12804 / NRRL 8165 / MA-4680), this protein is Protein RecA.